The chain runs to 142 residues: Nucleoside diphosphate kinase (142 aa).

ATP is bound by residues K9, F57, R85, T91, R102, and N112. The Pros-phosphohistidine intermediate role is filled by H115.

The protein belongs to the NDK family. Homotetramer. The cofactor is Mg(2+).

It is found in the cytoplasm. It catalyses the reaction a 2'-deoxyribonucleoside 5'-diphosphate + ATP = a 2'-deoxyribonucleoside 5'-triphosphate + ADP. The catalysed reaction is a ribonucleoside 5'-diphosphate + ATP = a ribonucleoside 5'-triphosphate + ADP. Major role in the synthesis of nucleoside triphosphates other than ATP. The ATP gamma phosphate is transferred to the NDP beta phosphate via a ping-pong mechanism, using a phosphorylated active-site intermediate. The chain is Nucleoside diphosphate kinase from Dehalococcoides mccartyi (strain CBDB1).